The primary structure comprises 384 residues: Centrosomal protein of 44 kDa (384 aa).

The segment at 11–188 (RKLEQRLRTL…TKCYSSALVE (178 aa)) is binds with microtubules and centrioles. Positions 191-222 (EEEEPTSDSEGGSHLEHEMESPFETAETTPNS) are disordered. Over residues 201–210 (GGSHLEHEME) the composition is skewed to basic and acidic residues. 2 coiled-coil regions span residues 221–260 (NSEQIELLRKQLAECQEKLQRLDCVEQRLQSLETSMKGKI) and 353–378 (TEDSNETTKQRMERITKMMEETSKLL).

In terms of assembly, binds to centriolar microtubules.

Its subcellular location is the cytoplasm. It is found in the cytoskeleton. The protein resides in the microtubule organizing center. The protein localises to the centrosome. It localises to the centriole. Its subcellular location is the spindle pole. It is found in the midbody. Functionally, centriole-enriched microtubule-binding protein involved in centriole biogenesis. In collaboration with CEP295 and POC1B, is required for the centriole-to-centrosome conversion by ensuring the formation of bona fide centriole wall. Functions as a linker component that maintains centrosome cohesion. Associates with CROCC and regulates its stability and localization to the centrosome. This chain is Centrosomal protein of 44 kDa (cep44), found in Xenopus laevis (African clawed frog).